The chain runs to 625 residues: Baeyer-Villiger monooxygenase ATR8 (625 aa).

Residues Asp-112, 120-123, Asp-132, and Tyr-138 each bind FAD; that span reads TWYW. Residue 130-132 coordinates NADP(+); sequence QCD. NADP(+) is bound by residues 266–272, 289–290, and 405–406; these read TGATAIQ, RT, and KR.

Belongs to the FAD-binding monooxygenase family. Requires FAD as cofactor.

It participates in mycotoxin biosynthesis. Its function is as follows. Baeyer-Villiger monooxygenase; part of the core atranone cluster (CAC) which products are predicted to catalyze most or all steps of mycotoxin atranone synthesis, starting from geranylgeranyl pyrophosphate (GGPP). The initial cyclization of GGPP to dolabellane is probably performed by the terpene cyclase ATR13. The Baeyer-Villiger oxidation near the end of the atranone synthesis, which converts atranones D and E to atranones F and G is predicted to be catalyzed by the monooxygenase ATR8. Of the CAC's other predicted gene products, the reducing PKS ATR6 might synthesize a polyketide chain. This polyketide is probably transferred onto the atranone backbone by the polyketide transferase ATR5. Other predicted CAC products include 4 oxygenases (ATR2, ATR3, ATR4, and ATR14), 3 short-chain reductases (ATR7, ATR9, and ATR10), and a methyltransferase (ATR12). These may all be involved in the various steps of atranone biosynthesis, although their specific roles must await experimental determination. This Stachybotrys chlorohalonatus (strain IBT 40285) protein is Baeyer-Villiger monooxygenase ATR8.